The primary structure comprises 194 residues: uncharacterized protein (194 aa).

The 61-residue stretch at 2–62 (QGPRERMVVS…CEAVDYAGEH (61 aa)) folds into the HTH tetR-type domain. Residues 25–44 (AISDVLQHSGAPRGSAYHYF) constitute a DNA-binding region (H-T-H motif).

This is an uncharacterized protein from Mycobacterium tuberculosis (strain CDC 1551 / Oshkosh).